Reading from the N-terminus, the 190-residue chain is Hypoxanthine/guanine phosphoribosyltransferase (190 aa).

Belongs to the purine/pyrimidine phosphoribosyltransferase family. Archaeal HPRT subfamily. As to quaternary structure, homodimer.

The protein resides in the cytoplasm. The enzyme catalyses IMP + diphosphate = hypoxanthine + 5-phospho-alpha-D-ribose 1-diphosphate. It carries out the reaction GMP + diphosphate = guanine + 5-phospho-alpha-D-ribose 1-diphosphate. Its pathway is purine metabolism; IMP biosynthesis via salvage pathway; IMP from hypoxanthine: step 1/1. Functionally, catalyzes a salvage reaction resulting in the formation of IMP that is energically less costly than de novo synthesis. This is Hypoxanthine/guanine phosphoribosyltransferase from Methanohalophilus mahii (strain ATCC 35705 / DSM 5219 / SLP).